Here is a 147-residue protein sequence, read N- to C-terminus: Probable 4-amino-4-deoxy-L-arabinose-phosphoundecaprenol flippase subunit ArnF (147 aa).

At 1 to 23 (MSNDHPQGQLPASPARSALKGYL) the chain is on the cytoplasmic side. A helical membrane pass occupies residues 24-44 (YVLGSILLVTAAQLGMKWGVI). Residues 45 to 62 (QLPTWQMDLAVMLAHPLP) lie on the Periplasmic side of the membrane. Residues 63 to 83 (LLVILAGVGCYALSLLCWLAA) traverse the membrane as a helical segment. At 84 to 93 (LHSTPLNIAY) the chain is on the cytoplasmic side. Residues 94-114 (PLLSTSYALVYLLAVNIPLFA) traverse the membrane as a helical segment. At 115–121 (EPLEPGK) the chain is on the periplasmic side. A helical transmembrane segment spans residues 122 to 142 (ALGVLFILLGAVLVGIKPAAG). The Cytoplasmic portion of the chain corresponds to 143–147 (TKQTG).

Belongs to the ArnF family. As to quaternary structure, heterodimer of ArnE and ArnF.

It localises to the cell inner membrane. The protein operates within bacterial outer membrane biogenesis; lipopolysaccharide biosynthesis. In terms of biological role, translocates 4-amino-4-deoxy-L-arabinose-phosphoundecaprenol (alpha-L-Ara4N-phosphoundecaprenol) from the cytoplasmic to the periplasmic side of the inner membrane. This Aeromonas hydrophila subsp. hydrophila (strain ATCC 7966 / DSM 30187 / BCRC 13018 / CCUG 14551 / JCM 1027 / KCTC 2358 / NCIMB 9240 / NCTC 8049) protein is Probable 4-amino-4-deoxy-L-arabinose-phosphoundecaprenol flippase subunit ArnF.